The chain runs to 207 residues: Protein YABBY 6 (207 aa).

Residues 16–43 form a C4-type zinc finger; sequence CNFCNTILAVSVPGNSMLNIVTVRCGHC.

The protein belongs to the YABBY family. As to expression, expressed in leaf blades, leaf sheaths and flowers.

Its subcellular location is the nucleus. The chain is Protein YABBY 6 (YAB6) from Oryza sativa subsp. japonica (Rice).